Reading from the N-terminus, the 175-residue chain is CASP-like protein 2C1 (175 aa).

At 1–7 (MVRLRET) the chain is on the cytoplasmic side. Residues 8–28 (EVILRLCIVFFILLSSCLIGL) traverse the membrane as a helical segment. Residues 29–51 (DSQTKEIAYIHKKVSFRYLLALE) are Extracellular-facing. Residues 52–72 (AELYINVVVAAYNLVQIGLGW) form a helical membrane-spanning segment. Over 73 to 91 (YNVEQKTSNPKWFSYLLDQ) the chain is Cytoplasmic. The chain crosses the membrane as a helical span at residues 92–112 (TAAYVVFAGTSAAAQHSLLVV). Over 113–136 (TGSRELQWMKWCYKFTRFCFQMGS) the chain is Extracellular. The helical transmembrane segment at 137–157 (AIILNYIAAALMVLLSSISAF) threads the bilayer. Residues 158-175 (NLFRLYSPKRFFSFKSSS) lie on the Cytoplasmic side of the membrane.

It belongs to the Casparian strip membrane proteins (CASP) family. As to quaternary structure, homodimer and heterodimers.

It is found in the cell membrane. This Arabidopsis lyrata subsp. lyrata (Lyre-leaved rock-cress) protein is CASP-like protein 2C1.